Here is a 266-residue protein sequence, read N- to C-terminus: GTP cyclohydrolase FolE2 1 (266 aa).

The protein belongs to the GTP cyclohydrolase IV family.

It catalyses the reaction GTP + H2O = 7,8-dihydroneopterin 3'-triphosphate + formate + H(+). Its pathway is cofactor biosynthesis; 7,8-dihydroneopterin triphosphate biosynthesis; 7,8-dihydroneopterin triphosphate from GTP: step 1/1. In terms of biological role, converts GTP to 7,8-dihydroneopterin triphosphate. In Dechloromonas aromatica (strain RCB), this protein is GTP cyclohydrolase FolE2 1.